Here is a 308-residue protein sequence, read N- to C-terminus: Taste receptor type 2 member 107 (308 aa).

Residues 1–7 are Extracellular-facing; the sequence is MLSAAEG. A helical membrane pass occupies residues 8–28; the sequence is ILLCVVTSEAVLGVLGDTFIA. Residues 29 to 43 are Cytoplasmic-facing; sequence LANCMEYAKNKKLSK. Residues 44–64 form a helical membrane-spanning segment; sequence IGFILIGLAISRIGVVWIIIL. Residues 65-94 are Extracellular-facing; sequence QGYMQVFFPHILTFGNITEYITYIWVFLNH. N80 carries an N-linked (GlcNAc...) asparagine glycan. A helical membrane pass occupies residues 95-115; that stretch reads LSVWFATNLNILYFLKIANFS. At 116–127 the chain is on the cytoplasmic side; the sequence is NSVFLWLKSRVR. The chain crosses the membrane as a helical span at residues 128 to 148; that stretch reads VVFIFLSGCLLTSWLLCFPQF. Residues 149–180 lie on the Extracellular side of the membrane; sequence SKMLNNSKMYWGNTSWLQQQKNVFLINQSLTN. N-linked (GlcNAc...) asparagine glycosylation is found at N153, N161, and N175. The chain crosses the membrane as a helical span at residues 181–201; the sequence is LGIFFFIIVSLITCFLLIVFL. Over 202-232 the chain is Cytoplasmic; sequence WRHIRQMHSDGSGLRDLNTEAHVKAMRVLIS. The helical transmembrane segment at 233 to 253 threads the bilayer; that stretch reads FAVLFILHFVGLSIQVLCFFL. The Extracellular segment spans residues 254–258; it reads PQNNL. A helical membrane pass occupies residues 259–279; it reads LFITGLIATCLYPCGHSIILI. The Cytoplasmic portion of the chain corresponds to 280 to 308; it reads LGNKQLKQASLKALQHLTCCETKRNLSVT.

Belongs to the G-protein coupled receptor T2R family.

It localises to the membrane. In terms of biological role, putative taste receptor which may play a role in the perception of bitterness. This chain is Taste receptor type 2 member 107, found in Rattus norvegicus (Rat).